The sequence spans 286 residues: Energy-coupling factor transporter ATP-binding protein EcfA2 (286 aa).

One can recognise an ABC transporter domain in the interval 3-246 (IQFNQVSYIY…KTQLLKWHIE (244 aa)). 40–47 (GQTGSGKS) provides a ligand contact to ATP.

It belongs to the ABC transporter superfamily. Energy-coupling factor EcfA family. As to quaternary structure, forms a stable energy-coupling factor (ECF) transporter complex composed of 2 membrane-embedded substrate-binding proteins (S component), 2 ATP-binding proteins (A component) and 2 transmembrane proteins (T component).

It is found in the cell membrane. Its function is as follows. ATP-binding (A) component of a common energy-coupling factor (ECF) ABC-transporter complex. Unlike classic ABC transporters this ECF transporter provides the energy necessary to transport a number of different substrates. This is Energy-coupling factor transporter ATP-binding protein EcfA2 from Staphylococcus epidermidis (strain ATCC 35984 / DSM 28319 / BCRC 17069 / CCUG 31568 / BM 3577 / RP62A).